The chain runs to 484 residues: Pre-glycoprotein polyprotein GP complex (484 aa).

Gly-2 carries N-myristoyl glycine; by host lipidation. Topologically, residues Gly-2–Glu-17 are extracellular. A helical membrane pass occupies residues Ala-18–Lys-33. The Cytoplasmic portion of the chain corresponds to Gly-34–Ser-58. Residue Cys-57 coordinates Zn(2+). Over Phe-59–Asp-423 the chain is Extracellular. 4 cysteine pairs are disulfide-bonded: Cys-85–Cys-225, Cys-270–Cys-283, Cys-292–Cys-301, and Cys-355–Cys-376. Residues Asn-88, Asn-125, Asn-178, and Asn-218 are each glycosylated (N-linked (GlcNAc...) asparagine; by host). Residues Asn-356, Asn-364, Asn-381, and Asn-386 are each glycosylated (N-linked (GlcNAc...) asparagine; by host). A helical membrane pass occupies residues Ile-424–Pro-444. Residues Thr-445–His-484 lie on the Cytoplasmic side of the membrane. Residues His-446, His-448, Cys-454, His-458, Cys-466, Cys-468, and His-484 each contribute to the Zn(2+) site.

The protein belongs to the arenaviridae GPC protein family. In terms of assembly, interacts with glycoprotein G2. Part of the GP complex (GP-C) together with glycoprotein G1 and glycoprotein G2. The GP-complex interacts with protein Z, which interacts with ribonucleocapsid; these interactions may induce virion budding. As to quaternary structure, homotrimer; disulfide-linked. In pre-fusion state, G1 homotrimers bind G2 homotrimers via ionic interactions. Part of the GP complex (GP-C) together with glycoprotein G2 and the stable signal peptide. The GP-complex interacts with protein Z, which interacts with ribonucleocapsid; these interactions may induce virion budding. Homotrimer. Interacts with the stable signal peptide. In pre-fusion state, G2 homotrimers bind G1 homotrimers via ionic interactions. Part of the GP complex (GP-C) together with glycoprotein G1 and the stable signal peptide. Acidification in the endosome triggers rearrangements, which ultimately leads to a 6 helix bundle formed by the two heptad repeat domains (HR1 and HR2) in post-fusion state. The GP-complex interacts with protein Z, which interacts with ribonucleocapsid; these interactions may induce virion budding. Specific enzymatic cleavages in vivo yield mature proteins. GP-C polyprotein is cleaved in the endoplasmic reticulum by the host protease MBTPS1. Only cleaved glycoprotein is incorporated into virions. In terms of processing, the SSP remains stably associated with the GP complex following cleavage by signal peptidase and plays crucial roles in the trafficking of GP through the secretory pathway. Post-translationally, myristoylation is necessary for GP2-mediated fusion activity.

Its subcellular location is the virion membrane. The protein resides in the host endoplasmic reticulum membrane. It is found in the host Golgi apparatus membrane. The protein localises to the host cell membrane. In terms of biological role, functions as a cleaved signal peptide that is retained as the third component of the GP complex (GP-C). Helps to stabilize the spike complex in its native conformation. The SSP is required for efficient glycoprotein expression, post-translational maturation cleavage of G1 and G2, glycoprotein transport to the cell surface plasma membrane, formation of infectious virus particles, and acid pH-dependent glycoprotein-mediated cell fusion. Glycoprotein G1: Forms the virion spikes together with glycoprotein G2. The glycoprotein spike trimers are connected to the underlying matrix. Interacts with the host receptor leading to virus endocytosis. Its function is as follows. Forms the virion spikes together with glycoprotein G1. The glycoprotein spike trimers are connected to the underlying matrix. Class I viral fusion protein that directs fusion of viral and host endosomal membranes, leading to delivery of the nucleocapsid into the cytoplasm. Membrane fusion is mediated by irreversible conformational changes induced by acidification. This chain is Pre-glycoprotein polyprotein GP complex, found in Chapare mammarenavirus (isolate Human/Bolivia/810419/2003).